A 39-amino-acid chain; its full sequence is GVDKEGCRKLLGGCTIDDDCCPHLGCNKKYWHCGWDGTF.

Cystine bridges form between cysteine 7–cysteine 21, cysteine 14–cysteine 26, and cysteine 20–cysteine 33. A Phenylalanine amide modification is found at phenylalanine 39.

In terms of tissue distribution, expressed by the venom gland.

Its subcellular location is the secreted. Inhibits mammalian voltage-gated sodium channel subtypes Nav1.5/SCN5A and Nav1.8/SCN10A by shifting the voltage dependence of channel activation to more depolarized potentials and by blocking the inward component of the sodium current. In vivo, this toxin causes erect, elevated tail, initial partial ataxia, followed by recovery over approximately 1 hour after injection and the progressive development of shaking. Although paralysis subsides, the body tremors never cease and persist until the end of the experiment. In Ceratogyrus marshalli (Straighthorned baboon tarantula), this protein is Beta-theraphotoxin-Cm2a.